The chain runs to 771 residues: U3 small nucleolar RNA-associated protein 14 homolog A (771 aa).

The segment at 23–49 (PKDYLLSESEDEGDNDGERKHQKLLEA) is disordered. Residues Ser-29, Ser-31, Ser-52, Ser-77, and Ser-81 each carry the phosphoserine modification. The stretch at 40 to 67 (ERKHQKLLEAISSLDGKNRRKLAERSEA) forms a coiled coil. A Glycyl lysine isopeptide (Lys-Gly) (interchain with G-Cter in SUMO2) cross-link involves residue Lys-122. Thr-205 carries the post-translational modification Phosphothreonine. 2 coiled-coil regions span residues 216–290 (SLEE…EKAR) and 317–347 (LEARQAMQEQLSKNKELTQKLQVASESEEEE). Disordered stretches follow at residues 334–355 (TQKLQVASESEEEEGGTEDVEE) and 367–557 (MNAD…KKEQ). Residues 342–355 (ESEEEEGGTEDVEE) are compositionally biased toward acidic residues. Residues 399 to 436 (LEAHGVSESEGEERPVAEEEILLREFEERRSLRKRSEL) show a composition bias toward basic and acidic residues. Phosphoserine is present on residues Ser-405 and Ser-407. At Arg-433 the chain carries Citrulline. Phosphoserine is present on residues Ser-437 and Ser-445. Lys-449 is covalently cross-linked (Glycyl lysine isopeptide (Lys-Gly) (interchain with G-Cter in SUMO2)). Residue Ser-453 is modified to Phosphoserine. A compositionally biased stretch (basic and acidic residues) spans 504–529 (RPERVQTLEELEELGKEECFQNKELP). Residue Lys-519 forms a Glycyl lysine isopeptide (Lys-Gly) (interchain with G-Cter in SUMO2) linkage. Polar residues predominate over residues 535-544 (GQQSERTPNN). Over residues 547 to 557 (DAPKEKKKKEQ) the composition is skewed to basic and acidic residues. At Ser-569 the chain carries Phosphoserine. Position 589 is a citrulline (Arg-589). Residue Lys-733 forms a Glycyl lysine isopeptide (Lys-Gly) (interchain with G-Cter in SUMO2) linkage. The span at 740-751 (RSSSRSDLSVIQ) shows a compositional bias: polar residues. The disordered stretch occupies residues 740 to 771 (RSSSRSDLSVIQRNPKRITTRHKKQLKKCSVD). Residues 753–771 (NPKRITTRHKKQLKKCSVD) show a composition bias toward basic residues.

The protein belongs to the UTP14 family. Interacts with DHX37. Citrullinated by PADI4. Ubiquitously expressed.

It is found in the nucleus. The protein resides in the nucleolus. In terms of biological role, may be required for ribosome biogenesis. The sequence is that of U3 small nucleolar RNA-associated protein 14 homolog A (UTP14A) from Homo sapiens (Human).